The chain runs to 362 residues: Phosphoserine aminotransferase (362 aa).

Residue arginine 42 participates in L-glutamate binding. Pyridoxal 5'-phosphate contacts are provided by residues alanine 76–arginine 77, tryptophan 102, threonine 153, aspartate 174, and glutamine 197. Lysine 198 carries the post-translational modification N6-(pyridoxal phosphate)lysine. Asparagine 239 to threonine 240 provides a ligand contact to pyridoxal 5'-phosphate.

It belongs to the class-V pyridoxal-phosphate-dependent aminotransferase family. SerC subfamily. Homodimer. The cofactor is pyridoxal 5'-phosphate.

It localises to the cytoplasm. It carries out the reaction O-phospho-L-serine + 2-oxoglutarate = 3-phosphooxypyruvate + L-glutamate. The enzyme catalyses 4-(phosphooxy)-L-threonine + 2-oxoglutarate = (R)-3-hydroxy-2-oxo-4-phosphooxybutanoate + L-glutamate. The protein operates within amino-acid biosynthesis; L-serine biosynthesis; L-serine from 3-phospho-D-glycerate: step 2/3. It functions in the pathway cofactor biosynthesis; pyridoxine 5'-phosphate biosynthesis; pyridoxine 5'-phosphate from D-erythrose 4-phosphate: step 3/5. Catalyzes the reversible conversion of 3-phosphohydroxypyruvate to phosphoserine and of 3-hydroxy-2-oxo-4-phosphonooxybutanoate to phosphohydroxythreonine. This chain is Phosphoserine aminotransferase, found in Xenorhabdus nematophila (strain ATCC 19061 / DSM 3370 / CCUG 14189 / LMG 1036 / NCIMB 9965 / AN6).